A 263-amino-acid chain; its full sequence is NH(3)-dependent NAD(+) synthetase (263 aa).

An ATP-binding site is contributed by 29–36 (GISGGIDS). Asp-35 provides a ligand contact to Mg(2+). Arg-114 is a deamido-NAD(+) binding site. Thr-134 lines the ATP pocket. Residue Glu-139 coordinates Mg(2+). The deamido-NAD(+) site is built by Lys-147 and Asp-154. 2 residues coordinate ATP: Lys-163 and Ser-185. Residue 244–245 (HK) coordinates deamido-NAD(+).

This sequence belongs to the NAD synthetase family. Homodimer.

The enzyme catalyses deamido-NAD(+) + NH4(+) + ATP = AMP + diphosphate + NAD(+) + H(+). It participates in cofactor biosynthesis; NAD(+) biosynthesis; NAD(+) from deamido-NAD(+) (ammonia route): step 1/1. Functionally, catalyzes the ATP-dependent amidation of deamido-NAD to form NAD. Uses ammonia as a nitrogen source. The chain is NH(3)-dependent NAD(+) synthetase from Methanococcoides burtonii (strain DSM 6242 / NBRC 107633 / OCM 468 / ACE-M).